The primary structure comprises 124 residues: Small ribosomal subunit protein uS12 (124 aa).

The tract at residues 9 to 28 (KSERTVQKNQTKSPALDSCP) is disordered. Aspartate 89 is subject to 3-methylthioaspartic acid.

This sequence belongs to the universal ribosomal protein uS12 family. As to quaternary structure, part of the 30S ribosomal subunit. Contacts proteins S8 and S17. May interact with IF1 in the 30S initiation complex.

Its function is as follows. With S4 and S5 plays an important role in translational accuracy. Functionally, interacts with and stabilizes bases of the 16S rRNA that are involved in tRNA selection in the A site and with the mRNA backbone. Located at the interface of the 30S and 50S subunits, it traverses the body of the 30S subunit contacting proteins on the other side and probably holding the rRNA structure together. The combined cluster of proteins S8, S12 and S17 appears to hold together the shoulder and platform of the 30S subunit. This is Small ribosomal subunit protein uS12 from Bdellovibrio bacteriovorus (strain ATCC 15356 / DSM 50701 / NCIMB 9529 / HD100).